Reading from the N-terminus, the 118-residue chain is UPF0102 protein Franean1_1156 (118 aa).

This sequence belongs to the UPF0102 family.

The polypeptide is UPF0102 protein Franean1_1156 (Parafrankia sp. (strain EAN1pec)).